A 32-amino-acid polypeptide reads, in one-letter code: Toxic phospholipase A2 (32 aa).

The protein belongs to the phospholipase A2 family. Group III subfamily. Requires Ca(2+) as cofactor.

Its subcellular location is the secreted. It is found in the nematocyst. The catalysed reaction is a 1,2-diacyl-sn-glycero-3-phosphocholine + H2O = a 1-acyl-sn-glycero-3-phosphocholine + a fatty acid + H(+). In terms of biological role, PLA2 catalyzes the calcium-dependent hydrolysis of the 2-acyl groups in 3-sn-phosphoglycerides. This chain is Toxic phospholipase A2, found in Rhopilema nomadica (Mediteranean medusa).